A 416-amino-acid chain; its full sequence is 1-deoxy-D-xylulose 5-phosphate reductoisomerase (416 aa).

T10, G11, S12, I13, G36, R37, N38, and N130 together coordinate NADPH. K131 serves as a coordination point for 1-deoxy-D-xylulose 5-phosphate. Residue E132 participates in NADPH binding. D156 contributes to the Mn(2+) binding site. Residues S157, E158, S194, and H217 each contribute to the 1-deoxy-D-xylulose 5-phosphate site. E158 contributes to the Mn(2+) binding site. Residue G223 participates in NADPH binding. S230, N235, K236, and E239 together coordinate 1-deoxy-D-xylulose 5-phosphate. Residue E239 coordinates Mn(2+).

Belongs to the DXR family. The cofactor is Mg(2+). Mn(2+) serves as cofactor.

The catalysed reaction is 2-C-methyl-D-erythritol 4-phosphate + NADP(+) = 1-deoxy-D-xylulose 5-phosphate + NADPH + H(+). It functions in the pathway isoprenoid biosynthesis; isopentenyl diphosphate biosynthesis via DXP pathway; isopentenyl diphosphate from 1-deoxy-D-xylulose 5-phosphate: step 1/6. Its function is as follows. Catalyzes the NADPH-dependent rearrangement and reduction of 1-deoxy-D-xylulose-5-phosphate (DXP) to 2-C-methyl-D-erythritol 4-phosphate (MEP). The polypeptide is 1-deoxy-D-xylulose 5-phosphate reductoisomerase (Synechococcus sp. (strain CC9311)).